The sequence spans 154 residues: Large ribosomal subunit protein uL22 (154 aa).

Belongs to the universal ribosomal protein uL22 family. Part of the 50S ribosomal subunit.

Its function is as follows. This protein binds specifically to 23S rRNA. It makes multiple contacts with different domains of the 23S rRNA in the assembled 50S subunit and ribosome. Functionally, the globular domain of the protein is located near the polypeptide exit tunnel on the outside of the subunit, while an extended beta-hairpin is found that lines the wall of the exit tunnel in the center of the 70S ribosome. This is Large ribosomal subunit protein uL22 from Methanosphaera stadtmanae (strain ATCC 43021 / DSM 3091 / JCM 11832 / MCB-3).